We begin with the raw amino-acid sequence, 326 residues long: Transmembrane protein 171 (326 aa).

4 consecutive transmembrane segments (helical) span residues 22 to 42, 57 to 77, 114 to 134, and 161 to 181; these read IFFLFVIGAILLCVGVLLSIF, MMLKIAGPACAVVGLGAVILA, LIFGFLFLTSGMLISVLGIWV, and FLSLQILGPLIVLVGLCFFVV. Residues 229–326 form a disordered region; the sequence is FPESSASAAA…LSPSSEPSPP (98 aa). A compositionally biased stretch (low complexity) spans 230 to 240; it reads PESSASAAARS. A compositionally biased stretch (polar residues) spans 257–266; the sequence is SIFQSGSPTP. Low complexity-rich tracts occupy residues 288 to 302 and 312 to 326; these read SSSETSHTLHLLSEL and ATTTSLSPSSEPSPP.

Its subcellular location is the membrane. The sequence is that of Transmembrane protein 171 (TMEM171) from Bos taurus (Bovine).